Reading from the N-terminus, the 72-residue chain is Large ribosomal subunit protein uL29 (72 aa).

This sequence belongs to the universal ribosomal protein uL29 family.

The protein is Large ribosomal subunit protein uL29 of Chlamydia trachomatis serovar L2 (strain ATCC VR-902B / DSM 19102 / 434/Bu).